The sequence spans 158 residues: Endoribonuclease YbeY (158 aa).

Residues histidine 118, histidine 122, and histidine 128 each contribute to the Zn(2+) site.

This sequence belongs to the endoribonuclease YbeY family. Zn(2+) is required as a cofactor.

Its subcellular location is the cytoplasm. Functionally, single strand-specific metallo-endoribonuclease involved in late-stage 70S ribosome quality control and in maturation of the 3' terminus of the 16S rRNA. This chain is Endoribonuclease YbeY, found in Alteromonas mediterranea (strain DSM 17117 / CIP 110805 / LMG 28347 / Deep ecotype).